The sequence spans 101 residues: Small ubiquitin-related modifier 1 (101 aa).

Ser2 carries the N-acetylserine modification. Ser2 carries the phosphoserine modification. Lys7 participates in a covalent cross-link: Glycyl lysine isopeptide (Lys-Gly) (interchain with G-Cter in SUMO1); alternate. Residue Lys7 forms a Glycyl lysine isopeptide (Lys-Gly) (interchain with G-Cter in SUMO2); alternate linkage. Ser9 bears the Phosphoserine mark. Glycyl lysine isopeptide (Lys-Gly) (interchain with G-Cter in SUMO2) cross-links involve residues Lys16, Lys17, and Lys23. The interval 16–25 (KKEGEYIKLK) is (Microbial infection) Interaction with Tula hantavirus. Residues 20-97 (EYIKLKVIGQ…IEVYQEQTGG (78 aa)) enclose the Ubiquitin-like domain. Lys25 participates in a covalent cross-link: Glycyl lysine isopeptide (Lys-Gly) (interchain with G-Cter in SUMO1). At Ser32 the chain carries Phosphoserine. Glycyl lysine isopeptide (Lys-Gly) (interchain with G-Cter in SUMO2) cross-links involve residues Lys37, Lys39, Lys45, and Lys46. A (Microbial infection) Interaction with Tula hantavirus region spans residues 37-40 (KVKM). Gly97 is covalently cross-linked (Glycyl lysine isopeptide (Gly-Lys) (interchain with K-? in acceptor proteins)). A propeptide spanning residues 98–101 (HSTV) is cleaved from the precursor.

It belongs to the ubiquitin family. SUMO subfamily. As to quaternary structure, covalently attached to KCNB1; UBE2I increases cross-linking with KCNB1 and PIAS1 decreases cross-links with KCNB1. Interacts with SAE2, RANBP2, PIAS1 and PIAS2. Interacts with PRKN. Covalently attached to a number of proteins such as IKFZ1, PML, RANGAP1, HIPK2, SP100, p53, p73-alpha, MDM2, JUN, DNMT3B and TDG. Also interacts with HIF1A, HIPK2, HIPK3, CHD3, EXOSC9, RAD51 and RAD52. Interacts with USP25 (via ts SIM domain); the interaction weakly sumoylates USP25. Interacts with SIMC1, CASP8AP2, RNF111 and SOBP (via SIM domains). Interacts with BHLHE40/DEC1. Interacts with RWDD3. Interacts with UBE2I/UBC9 and this interaction is enhanced in the presence of RWDD3. Interacts with MTA1. Interacts with SENP2. Interacts with HINT1. (Microbial infection) Interacts with Epstein-barr virus BGLF4. In terms of assembly, (Microbial infection) Interacts (via N-terminus) with Tula hantavirus nucleoprotein. As to quaternary structure, (Microbial infection) Interacts (via N-terminus) with Hantaan hantavirus nucleoprotein. Post-translationally, cleavage of precursor form by SENP1 or SENP2 is necessary for function. In terms of processing, polymeric SUMO1 chains undergo polyubiquitination by RNF4.

The protein resides in the nucleus membrane. It is found in the nucleus speckle. It localises to the cytoplasm. The protein localises to the nucleus. Its subcellular location is the PML body. The protein resides in the cell membrane. Ubiquitin-like protein that can be covalently attached to proteins as a monomer or a lysine-linked polymer. Covalent attachment via an isopeptide bond to its substrates requires prior activation by the E1 complex SAE1-SAE2 and linkage to the E2 enzyme UBE2I, and can be promoted by E3 ligases such as PIAS1-4, RANBP2 or CBX4. This post-translational modification on lysine residues of proteins plays a crucial role in a number of cellular processes such as nuclear transport, DNA replication and repair, mitosis and signal transduction. Involved for instance in targeting RANGAP1 to the nuclear pore complex protein RANBP2. Covalently attached to the voltage-gated potassium channel KCNB1; this modulates the gating characteristics of KCNB1. Polymeric SUMO1 chains are also susceptible to polyubiquitination which functions as a signal for proteasomal degradation of modified proteins. May also regulate a network of genes involved in palate development. Covalently attached to ZFHX3. In Homo sapiens (Human), this protein is Small ubiquitin-related modifier 1 (SUMO1).